The primary structure comprises 665 residues: Probable potassium transport system protein Kup (665 aa).

Low complexity predominate over residues 1–18 (MASEAPHASAPDCAPASS). A disordered region spans residues 1–31 (MASEAPHASAPDCAPASSDIPQQDGGSTNGH). 12 helical membrane passes run 40–60 (FFALALGSVGVVFGDIGTSPL), 83–103 (VVSLALWALILIVTIKYVVFI), 131–151 (LVFVLGVAGAALFYGDAVITP), 171–191 (GVTNEVVLLIATVMLLGLFFI), 202–222 (LFGPVCAVWFGVMFSLGLMNL), 245–265 (GLTGFIVLGAVFLTVTGVEAL), 281–301 (WLFFVLPCLAMNYLGQGAFAL), 332–352 (LVLLAGAATVIASQAVITGAF), 380–400 (IFVPQLNTMLLLGVLAIMFTF), 409–429 (AYGLAVTGTMIVTTCMAFIVM), 435–455 (WSMPMALLFLVPFLALDITFL), and 462–482 (FFSGGWLPVLIGAALFTIMAT).

It belongs to the HAK/KUP transporter (TC 2.A.72) family.

Its subcellular location is the cell inner membrane. The catalysed reaction is K(+)(in) + H(+)(in) = K(+)(out) + H(+)(out). Functionally, transport of potassium into the cell. Likely operates as a K(+):H(+) symporter. This is Probable potassium transport system protein Kup from Caulobacter vibrioides (strain ATCC 19089 / CIP 103742 / CB 15) (Caulobacter crescentus).